A 207-amino-acid chain; its full sequence is Ribosomal RNA small subunit methyltransferase G (207 aa).

S-adenosyl-L-methionine is bound by residues G73, L78, 124–125, and R139; that span reads VE.

It belongs to the methyltransferase superfamily. RNA methyltransferase RsmG family.

It localises to the cytoplasm. The enzyme catalyses guanosine(527) in 16S rRNA + S-adenosyl-L-methionine = N(7)-methylguanosine(527) in 16S rRNA + S-adenosyl-L-homocysteine. Its function is as follows. Specifically methylates the N7 position of guanine in position 527 of 16S rRNA. The chain is Ribosomal RNA small subunit methyltransferase G from Shigella dysenteriae serotype 1 (strain Sd197).